Here is a 75-residue protein sequence, read N- to C-terminus: MGSFSIWHWLVVLAIVLLVFGTKRLTSGAKDLGSAVKEFKKGMRDEDKPNAQLGDESRTQDASRTAQDEHDRNAR.

Residues 1-21 (MGSFSIWHWLVVLAIVLLVFG) traverse the membrane as a helical segment. The disordered stretch occupies residues 41–75 (KGMRDEDKPNAQLGDESRTQDASRTAQDEHDRNAR).

The protein belongs to the TatA/E family. In terms of assembly, the Tat system comprises two distinct complexes: a TatABC complex, containing multiple copies of TatA, TatB and TatC subunits, and a separate TatA complex, containing only TatA subunits. Substrates initially bind to the TatABC complex, which probably triggers association of the separate TatA complex to form the active translocon.

The protein resides in the cell inner membrane. Part of the twin-arginine translocation (Tat) system that transports large folded proteins containing a characteristic twin-arginine motif in their signal peptide across membranes. TatA could form the protein-conducting channel of the Tat system. The chain is Sec-independent protein translocase protein TatA from Stenotrophomonas maltophilia (strain K279a).